The following is an 87-amino-acid chain: Small ribosomal subunit protein bS20 (87 aa).

The tract at residues 1-26 is disordered; it reads MANIKSAQKRAVQSEKRRQHNASQRS.

Belongs to the bacterial ribosomal protein bS20 family.

In terms of biological role, binds directly to 16S ribosomal RNA. The polypeptide is Small ribosomal subunit protein bS20 (Glaesserella parasuis serovar 5 (strain SH0165) (Haemophilus parasuis)).